Consider the following 149-residue polypeptide: Small ribosomal subunit protein uS13 (149 aa).

The protein belongs to the universal ribosomal protein uS13 family. In terms of assembly, part of the 30S ribosomal subunit. Forms a loose heterodimer with protein S19. Forms two bridges to the 50S subunit in the 70S ribosome.

In terms of biological role, located at the top of the head of the 30S subunit, it contacts several helices of the 16S rRNA. In the 70S ribosome it contacts the 23S rRNA (bridge B1a) and protein L5 of the 50S subunit (bridge B1b), connecting the 2 subunits; these bridges are implicated in subunit movement. The chain is Small ribosomal subunit protein uS13 from Thermococcus kodakarensis (strain ATCC BAA-918 / JCM 12380 / KOD1) (Pyrococcus kodakaraensis (strain KOD1)).